Reading from the N-terminus, the 2367-residue chain is Toxin B (2367 aa).

Residues 2-91 (SLVNRKQLEK…EILELKNSNL (90 aa)) are four-helical bundle. Residues 96-469 (KNLHFIWIGG…YPEANTTITL (374 aa)) enclose the GT44 domain. Residues 96 to 469 (KNLHFIWIGG…YPEANTTITL (374 aa)) form a glucosyltransferase region region. UDP-alpha-D-glucose-binding positions include 101-103 (IWI), Asn139, 269-273 (SDILR), and 286-288 (DVD). Residues Asp286, Asp288, and Glu516 each coordinate Mg(2+). 519–521 (SLW) lines the UDP-alpha-D-glucose pocket. The autoprocessing region stretch occupies residues 545 to 800 (GEDDNLDFSQ…KSKNLPELST (256 aa)). Residues Glu546 and Asp547 each coordinate Zn(2+). The Peptidase C80 domain occupies 568 to 775 (SSSTKSSERG…EESIIKDISS (208 aa)). The 1D-myo-inositol hexakisphosphate site is built by Tyr578, Lys601, and Lys648. Position 654 (His654) interacts with Zn(2+). His654 (for protease activity) is an active-site residue. Cys699 acts as the Nucleophile; for protease activity in catalysis. His758 contributes to the Zn(2+) binding site. Residues Lys765, Lys776, and Lys793 each coordinate 1D-myo-inositol hexakisphosphate. Positions 801–1501 (LLQEIRNNSN…VVLIIKVYMD (701 aa)) are translocation region. Interaction with host frizzled receptors FZD1, FZD2 and FZD7 regions lie at residues 1434–1439 (LKTLMA), 1487–1512 (SELS…YYSN), and 1598–1600 (SLK). Cell wall-binding repeat units follow at residues 1833–1852 (VSGL…PIKN), 1854–1873 (ITGF…DNGG), 1876–1895 (SVGE…NGVL), 1926–1945 (FTGK…NYRA), 1946–1965 (AIEW…DTGR), 1967–1986 (FKGL…DGIM), 1987–2006 (QKGF…SGVM), 2007–2026 (KSGY…NGEM), 2057–2076 (YSGI…SFTA), 2077–2097 (VVGW…NTAE), 2099–2118 (SIGI…SGIM), 2119–2138 (QIGF…SGIV), 2139–2158 (ESGM…NGLV), 2209–2231 (ETGW…EAKK), 2233–2252 (YKGI…NGIM), 2253–2272 (RTGL…DGEM), 2273–2292 (QYGY…DGIM), 2323–2342 (YTGW…EYIA), and 2343–2362 (ATGS…DTAQ). The interval 1835–2367 (GLVYINDSLY…PDTAQLVISE (533 aa)) is receptor-binding (CROPS) region.

The protein belongs to the clostridial glucosylating toxin (LCGT) family. As to quaternary structure, interacts with host FZD1. Interacts with host FZD2; interaction promotes toxin entry into host cell and occupies the binding site for Wnt-adducted palmitoleate in FZD2, leading to prevent Wnt-binding and downstream Wnt signaling. Interacts with host FZD7. Interacts with host CSPG4. Interacts with host NECTIN3/PVRL3. The cofactor is Zn(2+). Requires Mn(2+) as cofactor. Mg(2+) is required as a cofactor. Undergoes autocatalytic cleavage to release the N-terminal part (Glucosyltransferase TcdB), which constitutes the active part of the toxin, in the host cytosol. 1D-myo-inositol hexakisphosphate-binding (InsP6) activates the peptidase C80 domain and promotes autoprocessing.

The protein localises to the secreted. Its subcellular location is the host endosome membrane. It is found in the host cytoplasm. The protein resides in the host cytosol. It localises to the host cell membrane. The catalysed reaction is L-threonyl-[protein] + UDP-alpha-D-glucose = 3-O-(alpha-D-glucosyl)-L-threonyl-[protein] + UDP + H(+). Protease activity is activated upon binding to 1D-myo-inositol hexakisphosphate (InsP6), which induces conformational reorganization. Precursor of a cytotoxin that targets and disrupts the colonic epithelium, inducing the host inflammatory and innate immune responses and resulting in diarrhea and pseudomembranous colitis. TcdB constitutes the main toxin that mediates the pathology of C.difficile infection, an opportunistic pathogen that colonizes the colon when the normal gut microbiome is disrupted. Compared to TcdA, TcdB is more virulent and more important for inducing the host inflammatory and innate immune responses. This form constitutes the precursor of the toxin: it enters into host cells and mediates autoprocessing to release the active toxin (Glucosyltransferase TcdB) into the host cytosol. Targets colonic epithelia by binding to the frizzled receptors FZD1, FZD2 and FZD7, and enters host cells via clathrin-mediated endocytosis. Frizzled receptors constitute the major host receptors in the colonic epithelium, but other receptors, such as CSPG4 or NECTIN3/PVRL3, have been identified. Binding to carbohydrates and sulfated glycosaminoglycans on host cell surface also contribute to entry into cells. Once entered into host cells, acidification in the endosome promotes the membrane insertion of the translocation region and formation of a pore, leading to translocation of the GT44 and peptidase C80 domains across the endosomal membrane. This activates the peptidase C80 domain and autocatalytic processing, releasing the N-terminal part (Glucosyltransferase TcdB), which constitutes the active part of the toxin, in the cytosol. Its function is as follows. Active form of the toxin, which is released into the host cytosol following autoprocessing and inactivates small GTPases. Acts by mediating monoglucosylation of small GTPases of the Rho family (Rac1, RhoA, RhoB, RhoC, RhoG and Cdc42) in host cells at the conserved threonine residue located in the switch I region ('Thr-37/35'), using UDP-alpha-D-glucose as the sugar donor. Monoglucosylation of host small GTPases completely prevents the recognition of the downstream effector, blocking the GTPases in their inactive form, leading to actin cytoskeleton disruption and cell death, resulting in the loss of colonic epithelial barrier function. In Clostridioides difficile (Peptoclostridium difficile), this protein is Toxin B.